A 173-amino-acid polypeptide reads, in one-letter code: Nicotinamide-nucleotide adenylyltransferase (173 aa).

This sequence belongs to the archaeal NMN adenylyltransferase family.

It is found in the cytoplasm. It carries out the reaction beta-nicotinamide D-ribonucleotide + ATP + H(+) = diphosphate + NAD(+). Its pathway is cofactor biosynthesis; NAD(+) biosynthesis; NAD(+) from nicotinamide D-ribonucleotide: step 1/1. In Methanosarcina mazei (strain ATCC BAA-159 / DSM 3647 / Goe1 / Go1 / JCM 11833 / OCM 88) (Methanosarcina frisia), this protein is Nicotinamide-nucleotide adenylyltransferase.